The chain runs to 760 residues: Serine/threonine-protein kinase dkf-1 (760 aa).

2 Phorbol-ester/DAG-type zinc fingers span residues 103 to 153 (PHVV…GIIV) and 194 to 244 (PHTL…PSNC). In terms of domain architecture, PH spans 316–444 (KNLEGWMIHF…QFIKESLQPP (129 aa)). A Protein kinase domain is found at 464-725 (VLSDKTLGSG…IEKCLEHGWL (262 aa)). ATP is bound by residues 470–478 (LGSGQFGTV) and K493. The active-site Proton acceptor is D589. T626 carries the phosphothreonine modification.

It belongs to the protein kinase superfamily. CAMK Ser/Thr protein kinase family. PKD subfamily. Requires Mg(2+) as cofactor. Prolonged phosphorylation at Thr-626 results in ubiquitination and degradation.

It localises to the cytoplasm. The protein localises to the membrane. It carries out the reaction L-seryl-[protein] + ATP = O-phospho-L-seryl-[protein] + ADP + H(+). It catalyses the reaction L-threonyl-[protein] + ATP = O-phospho-L-threonyl-[protein] + ADP + H(+). With respect to regulation, activated by DAG and phorbol esters. Phorbol-ester/DAG-type domain 1 binds phorbol ester with high affinity and mediates accumulation at the cell periphery. Phorbol-ester/DAG-type domain 2 binds phorbol ester with low affinity but may mediate initial contact, resulting in a conformational change allowing previously occluded domain 1 to anchor the kinase. Phosphorylation on Thr-626 is then also required for activation and may also result in a further conformational change. In terms of biological role, converts transient diacylglycerol (DAG) signals into prolonged physiological effects, independently of PKC. Role in the regulation of growth and neuromuscular control of movement. Involved in immune response to S.aureus bacterium by activating transcription factor hlh-30 downstream of phospholipase plc-1. The sequence is that of Serine/threonine-protein kinase dkf-1 from Caenorhabditis briggsae.